The following is a 444-amino-acid chain: Multidrug resistance protein MdtA (444 aa).

A signal peptide spans 1–20 (MKSQSKRTSRLFVFVGVVVA). Over residues 37–52 (NNTSGAQQSARGQDTS) the composition is skewed to polar residues. Disordered regions lie at residues 37–60 (NNTSGAQQSARGQDTSHGGRRNTP) and 398–444 (TPRS…AEKS). Residues 406–419 (ANPASAEKAAAEAE) show a composition bias toward low complexity. Over residues 435-444 (ARSTTAAEKS) the composition is skewed to polar residues.

It belongs to the membrane fusion protein (MFP) (TC 8.A.1) family. In terms of assembly, part of a tripartite efflux system composed of MdtA, MdtB and MdtC.

It is found in the cell inner membrane. The polypeptide is Multidrug resistance protein MdtA (Yersinia pestis bv. Antiqua (strain Antiqua)).